The primary structure comprises 51 residues: UPF0337 protein NE0131 (51 aa).

Belongs to the UPF0337 (CsbD) family.

The protein is UPF0337 protein NE0131 of Nitrosomonas europaea (strain ATCC 19718 / CIP 103999 / KCTC 2705 / NBRC 14298).